The chain runs to 335 residues: UPF0104 membrane protein PH1989 (335 aa).

8 helical membrane passes run 4-24 (YLLI…AGIE), 34-54 (DIRF…IWAV), 62-82 (GANI…GIFL), 122-142 (ILDV…ALTI), 148-168 (LIIL…TTVF), 231-251 (LYSF…FLSL), 266-286 (ASIA…TEVV), and 304-324 (VTML…GILV).

Belongs to the UPF0104 family.

It localises to the cell membrane. This Pyrococcus horikoshii (strain ATCC 700860 / DSM 12428 / JCM 9974 / NBRC 100139 / OT-3) protein is UPF0104 membrane protein PH1989.